We begin with the raw amino-acid sequence, 406 residues long: Linalool 8-monooxygenase (406 aa).

Position 355 (C355) interacts with heme.

It belongs to the cytochrome P450 family. The cofactor is heme.

It carries out the reaction linalool + 2 reduced [NADPH--hemoprotein reductase] + 2 O2 = (6E)-8-oxolinalool + 2 oxidized [NADPH--hemoprotein reductase] + 3 H2O + 2 H(+). It functions in the pathway terpene metabolism; linalool degradation. Catalyzes the 8-methyl hydroxylation of linalool. This is Linalool 8-monooxygenase (linC) from Pseudomonas putida (Arthrobacter siderocapsulatus).